A 418-amino-acid polypeptide reads, in one-letter code: Enolase 1 (418 aa).

Gln-162 contacts (2R)-2-phosphoglycerate. Glu-204 functions as the Proton donor in the catalytic mechanism. Positions 241, 285, and 312 each coordinate Mg(2+). Positions 337, 366, 367, and 388 each coordinate (2R)-2-phosphoglycerate. Catalysis depends on Lys-337, which acts as the Proton acceptor.

This sequence belongs to the enolase family. Requires Mg(2+) as cofactor.

It localises to the cytoplasm. Its subcellular location is the secreted. The protein localises to the cell surface. It carries out the reaction (2R)-2-phosphoglycerate = phosphoenolpyruvate + H2O. It participates in carbohydrate degradation; glycolysis; pyruvate from D-glyceraldehyde 3-phosphate: step 4/5. Its function is as follows. Catalyzes the reversible conversion of 2-phosphoglycerate (2-PG) into phosphoenolpyruvate (PEP). It is essential for the degradation of carbohydrates via glycolysis. The sequence is that of Enolase 1 from Lactococcus lactis subsp. cremoris (strain SK11).